The sequence spans 367 residues: 3-isopropylmalate dehydrogenase (367 aa).

75–88 contacts NAD(+); the sequence is GPKWDGIERSKRPE. Positions 95, 105, 133, and 230 each coordinate substrate. Residues aspartate 230, aspartate 254, and aspartate 258 each contribute to the Mg(2+) site. 288–300 provides a ligand contact to NAD(+); that stretch reads GSAPDIAGQDIAN.

Belongs to the isocitrate and isopropylmalate dehydrogenases family. LeuB type 1 subfamily. Homodimer. It depends on Mg(2+) as a cofactor. The cofactor is Mn(2+).

The protein localises to the cytoplasm. It catalyses the reaction (2R,3S)-3-isopropylmalate + NAD(+) = 4-methyl-2-oxopentanoate + CO2 + NADH. It participates in amino-acid biosynthesis; L-leucine biosynthesis; L-leucine from 3-methyl-2-oxobutanoate: step 3/4. Catalyzes the oxidation of 3-carboxy-2-hydroxy-4-methylpentanoate (3-isopropylmalate) to 3-carboxy-4-methyl-2-oxopentanoate. The product decarboxylates to 4-methyl-2 oxopentanoate. This chain is 3-isopropylmalate dehydrogenase, found in Psychrobacter cryohalolentis (strain ATCC BAA-1226 / DSM 17306 / VKM B-2378 / K5).